We begin with the raw amino-acid sequence, 537 residues long: Phosphoenolpyruvate carboxykinase (ATP) (537 aa).

R61, Y195, and K201 together coordinate substrate. ATP contacts are provided by residues K201, H220, and 236–244 (GLSGTGKTT). Mn(2+) is bound by residues K201 and H220. D257 is a binding site for Mn(2+). 3 residues coordinate ATP: E285, R323, and T448. Residue R323 participates in substrate binding.

It belongs to the phosphoenolpyruvate carboxykinase (ATP) family. Mn(2+) serves as cofactor.

It localises to the cytoplasm. It carries out the reaction oxaloacetate + ATP = phosphoenolpyruvate + ADP + CO2. Its pathway is carbohydrate biosynthesis; gluconeogenesis. Involved in the gluconeogenesis. Catalyzes the conversion of oxaloacetate (OAA) to phosphoenolpyruvate (PEP) through direct phosphoryl transfer between the nucleoside triphosphate and OAA. The protein is Phosphoenolpyruvate carboxykinase (ATP) of Parvibaculum lavamentivorans (strain DS-1 / DSM 13023 / NCIMB 13966).